The chain runs to 351 residues: Quinolinate phosphoribosyltransferase [decarboxylating] 2a, mitochondrial (351 aa).

Substrate contacts are provided by residues Arg-142, 173–175 (TRK), Arg-197, Lys-207, Glu-240, Asp-267, 299–301 (SGN), and 320–322 (SGA).

This sequence belongs to the NadC/ModD family. In terms of tissue distribution, expressed in roots and flowers.

Its subcellular location is the mitochondrion. It carries out the reaction nicotinate beta-D-ribonucleotide + CO2 + diphosphate = quinolinate + 5-phospho-alpha-D-ribose 1-diphosphate + 2 H(+). Its pathway is alkaloid biosynthesis; nicotine biosynthesis. It functions in the pathway cofactor biosynthesis; NAD(+) biosynthesis; nicotinate D-ribonucleotide from quinolinate: step 1/1. Its function is as follows. Involved in the biosynthesis of pyridine alkaloid natural products, leading mainly to the production of anabasine, anatabine, nicotine and nornicotine, effective deterrents against herbivores with antiparasitic and pesticide properties (neurotoxins); nornicotine serves as the precursor in the synthesis of the carcinogen compound N'-nitrosonornicotine (NNN). Involved in the catabolism of quinolinic acid (QA). The chain is Quinolinate phosphoribosyltransferase [decarboxylating] 2a, mitochondrial from Nicotiana tabacum (Common tobacco).